A 68-amino-acid polypeptide reads, in one-letter code: Bacteriocin lactococcin-B (68 aa).

The propeptide occupies 1-21 (MKNQLNFNIVSDEELAEVNGG).

The protein localises to the secreted. Its function is as follows. Kills Lactococci by dissipating the membrane potential of the cells. The protein is Bacteriocin lactococcin-B (lcnB) of Lactococcus lactis subsp. cremoris (Streptococcus cremoris).